We begin with the raw amino-acid sequence, 394 residues long: Elongation factor Tu (394 aa).

In terms of domain architecture, tr-type G spans 10 to 205 (KPHVNIGTIG…VDTWIPLPPR (196 aa)). Residues 19–26 (GHVDHGKT) form a G1 region. Position 19–26 (19–26 (GHVDHGKT)) interacts with GTP. A Mg(2+)-binding site is contributed by Thr-26. The tract at residues 60 to 64 (GITIN) is G2. The segment at 81-84 (DCPG) is G3. GTP is bound by residues 81-85 (DCPGH) and 136-139 (NKCD). Residues 136–139 (NKCD) are G4. Residues 174-176 (SAL) form a G5 region.

Belongs to the TRAFAC class translation factor GTPase superfamily. Classic translation factor GTPase family. EF-Tu/EF-1A subfamily. In terms of assembly, monomer.

Its subcellular location is the cytoplasm. It catalyses the reaction GTP + H2O = GDP + phosphate + H(+). In terms of biological role, GTP hydrolase that promotes the GTP-dependent binding of aminoacyl-tRNA to the A-site of ribosomes during protein biosynthesis. This chain is Elongation factor Tu, found in Bacteroides fragilis (strain ATCC 25285 / DSM 2151 / CCUG 4856 / JCM 11019 / LMG 10263 / NCTC 9343 / Onslow / VPI 2553 / EN-2).